We begin with the raw amino-acid sequence, 1086 residues long: Isoleucine--tRNA ligase (1086 aa).

The 'HIGH' region motif lies at 53-63; sequence PFANGLPHYGH. Positions 624-628 match the 'KMSKS' region motif; it reads KLSKR. Lysine 627 lines the ATP pocket.

The protein belongs to the class-I aminoacyl-tRNA synthetase family. IleS type 2 subfamily. In terms of assembly, monomer. It depends on Zn(2+) as a cofactor.

The protein resides in the cytoplasm. The enzyme catalyses tRNA(Ile) + L-isoleucine + ATP = L-isoleucyl-tRNA(Ile) + AMP + diphosphate. Functionally, catalyzes the attachment of isoleucine to tRNA(Ile). As IleRS can inadvertently accommodate and process structurally similar amino acids such as valine, to avoid such errors it has two additional distinct tRNA(Ile)-dependent editing activities. One activity is designated as 'pretransfer' editing and involves the hydrolysis of activated Val-AMP. The other activity is designated 'posttransfer' editing and involves deacylation of mischarged Val-tRNA(Ile). This chain is Isoleucine--tRNA ligase, found in Rickettsia prowazekii (strain Madrid E).